A 32-amino-acid chain; its full sequence is Apolipophorin-3 (32 aa).

The tract at residues Asp-1–Lys-32 is disordered. The span at Lys-20 to Lys-32 shows a compositional bias: polar residues.

The protein belongs to the insect apolipophorin-3 family. As to quaternary structure, equilibrium between a soluble monomer and a bound lipoprotein form. Apolipophorin-3 associates with lipophorin during lipid loading until each particle contains 9 or 14 molecules of apolipophorin-3. Hemolymph.

The protein localises to the secreted. Functionally, assists in the loading of diacylglycerol, generated from triacylglycerol stores in the fat body through the action of adipokinetic hormone, into lipophorin, the hemolymph lipoprotein. It increases the lipid carrying capacity of lipophorin by covering the expanding hydrophobic surface resulting from diacylglycerol uptake. It thus plays a critical role in the transport of lipids during flight in several species of insects. The protein is Apolipophorin-3 of Diatraea grandiosella (Southwestern corn borer).